The chain runs to 1233 residues: Structural maintenance of chromosomes protein 1A (1233 aa).

32–39 lines the ATP pocket; the sequence is GPNGSGKS. Coiled coils occupy residues 104–124 and 163–503; these read EYKINNKVVQLHEYSEELEKL and ELAQ…KAEI. Basic and acidic residues predominate over residues 284 to 293; the sequence is IKEKDSELNQ. Disordered regions lie at residues 284 to 308 and 348 to 369; these read IKEKDSELNQKRPQYIKAKENTSHK and QEFEERMEEESQSQGRDLTLEE. Residues Ser358 and Ser360 each carry the phosphoserine modification. The SMC hinge domain occupies 515 to 629; the sequence is VYGRLIDLCQ…DNVEDARRIA (115 aa). Residues Lys648 and Lys713 each carry the N6-acetyllysine modification. The stretch at 667–935 forms a coiled coil; the sequence is DEKAVDKLKE…RHNLLQACKM (269 aa). Positions 947 to 969 are disordered; sequence MDDISQEEGSSQGEESVSGSQRT. Low complexity predominate over residues 953-967; sequence EEGSSQGEESVSGSQ. Phosphoserine is present on residues Ser957, Ser962, Ser966, and Ser970. A coiled-coil region spans residues 988 to 1068; it reads EDLKDAQAEE…FEQIKKERFD (81 aa). At Lys1037 the chain carries N6-acetyllysine.

This sequence belongs to the SMC family. SMC1 subfamily. Forms a heterodimer with SMC3 in cohesin complexes. Cohesin complexes are composed of the SMC1 (SMC1A or SMC1B) and SMC3 heterodimer attached via their SMC hinge domain, RAD21 which link them, and one STAG protein (STAG1, STAG2 or STAG3), which interacts with RAD21. In germ cell cohesin complexes, SMC1A is mutually exclusive with SMC1B. Interacts with STAG3. Found in a complex with CDCA5, SMC3 and RAD21, PDS5A/SCC-112 and PDS5B/APRIN. Found in a complex containing POLE and SMC3. Interacts with BRCA1, SYCP2, NDC80, RPGR and BRAT1. The cohesin complex interacts with the cohesin loading complex subunits NIPBL/Scc2 (via HEAT repeats) and MAU2/Scc4. NIPBL directly contacts all members of the complex, RAD21, SMC1A/B, SMC3 and STAG1. Post-translationally, phosphorylated upon ionizing radiation or DNA methylation. Phosphorylation of Ser-957 and Ser-966 activates it and is required for S-phase checkpoint activation. Ubiquitinated by the DCX(DCAF15) complex, leading to its degradation. In terms of tissue distribution, ubiquitous (at protein level).

The protein localises to the nucleus. The protein resides in the chromosome. Its subcellular location is the centromere. Functionally, involved in chromosome cohesion during cell cycle and in DNA repair. Involved in DNA repair via its interaction with BRCA1 and its related phosphorylation by ATM, and works as a downstream effector in the ATM/NBS1 branch of S-phase checkpoint. Central component of cohesin complex. The cohesin complex is required for the cohesion of sister chromatids after DNA replication. The cohesin complex apparently forms a large proteinaceous ring within which sister chromatids can be trapped. At anaphase, the complex is cleaved and dissociates from chromatin, allowing sister chromatids to segregate. The cohesin complex may also play a role in spindle pole assembly during mitosis. Involved in DNA repair via its interaction with BRCA1 and its related phosphorylation by ATM, or via its phosphorylation by ATR. Works as a downstream effector both in the ATM/NBS1 branch and in the ATR/MSH2 branch of S-phase checkpoint. This Mus musculus (Mouse) protein is Structural maintenance of chromosomes protein 1A (Smc1a).